Here is a 788-residue protein sequence, read N- to C-terminus: Integrin beta-3 (788 aa).

An N-terminal signal peptide occupies residues 1-26 (MRARPRPRPLWATVLALGALAGVGVG). At 27-718 (GPNICTTRGV…EEPECPKGPD (692 aa)) the chain is on the extracellular side. In terms of domain architecture, PSI spans 30–76 (ICTTRGVSSCQQCLAVSPMCAWCSDEALPLGSPRCDLKENLLKDNCA). Disulfide bonds link C31–C49, C39–C461, C42–C64, C52–C75, C203–C210, C258–C299, C400–C412, C432–C459, C463–C483, C474–C486, C488–C497, C499–C529, C512–C527, C521–C532, C534–C547, C549–C570, C554–C568, C562–C573, and C575–C584. N125 carries N-linked (GlcNAc...) asparagine glycosylation. Positions 135 to 377 (DYPVDIYYLM…QLIVDAYGKI (243 aa)) constitute a VWFA domain. The Mg(2+) site is built by S147 and S149. 4 residues coordinate Ca(2+): S149, D152, D153, and D184. The involved in CX3CL1-, NRG1-, FGF1- and IGF1-binding stretch occupies residues 203-210 (CYDMKTTC). Ca(2+) is bound by residues N241, D243, P245, E246, and D277. E246 is a binding site for Mg(2+). The interval 293–313 (QPNDGQCHVGSDNHYSASTTM) is CX3CL1-binding. N346 carries N-linked (GlcNAc...) asparagine glycosylation. M361 serves as a coordination point for Ca(2+). N-linked (GlcNAc...) asparagine glycosylation is present at N397. 4 I-EGF domains span residues 463–498 (CQAQ…SQCE), 499–548 (CSEE…KYCE), 549–585 (CDDF…YYCN), and 586–625 (CTTR…DTCE). N478 carries an N-linked (GlcNAc...) asparagine glycan. N-linked (GlcNAc...) asparagine glycosylation is present at N585. Disulfide bonds link C586–C609, C593–C607, C601–C612, C614–C624, C627–C630, C634–C681, C640–C661, C643–C657, and C689–C713. N680 carries N-linked (GlcNAc...) asparagine glycosylation. A helical membrane pass occupies residues 719 to 741 (ILVVLLSVMGAILLIGLAALLIW). The Cytoplasmic segment spans residues 742-788 (KLLITIHDRKEFAKFEEERARAKWDTANNPLYKEATSTFTNITYRGT). T767 is modified (phosphothreonine). Y773 carries the post-translational modification Phosphotyrosine. Residues 777 to 783 (TSTFTNI) carry the LIR motif. The residue at position 779 (T779) is a Phosphothreonine; by PDPK1 and PKB/AKT1; in vitro. Y785 bears the Phosphotyrosine mark.

Belongs to the integrin beta chain family. As to quaternary structure, heterodimer of an alpha and a beta subunit. Beta-3 (ITGB3) associates with either alpha-IIb (ITGA2B) or alpha-V (ITGAV). Isoform Beta-3C interacts with FLNB. Interacts with COMP. Interacts with PDIA6 following platelet stimulation. Interacts with SYK; upon activation by ITGB3 promotes platelet adhesion. Interacts with MYO10. Interacts with DAB2. Interacts with FERMT2. Interacts with EMP2; regulates the levels of the heterodimer ITGA5:ITGB3 integrin expression on the plasma membrane. Integrin ITGAV:ITGB3 interacts with FBLN5 (via N-terminus). ITGAV:ITGB3 interacts with CCN3. ITGAV:ITGB3 and ITGA2B:ITGB3 interact with SELP (via C-type lectin domain); the interaction mediates cell-cell interaction and adhesion. ITGAV:ITGB3 is found in a ternary complex with CX3CR1 and CX3CL1. ITGAV:ITGB3 is found in a ternary complex with NRG1 and ERBB3. ITGAV:ITGB3 is found in a ternary complex with FGF1 and FGFR1. ITGAV:ITGB3 interacts with FGF2; it is likely that FGF2 can simultaneously bind ITGAV:ITGB3 and FGF receptors. ITGAV:ITGB3 binds to IL1B. ITGAV:ITGB3 is found in a ternary complex with IGF1 and IGF1R. ITGAV:ITGB3 interacts with IGF2. ITGAV:ITGB3 interacts with FBN1. ITGAV:ITGB3 interacts with CD9, CD81 and CD151 (via second extracellular domain). Interacts (via the allosteric site (site 2)) with CXCL12 in a CXCR4-independent manner. Interacts with MXRA8/DICAM; the interaction inhibits ITGAV:ITGB3 heterodimer formation. ITGAV:ITGB3 interacts with PTN. Forms a complex with PTPRZ1 and PTN that stimulates endothelial cell migration through ITGB3 Tyr-773 phosphorylation. ITGAV:ITGB3 interacts with SLC6A4. Interacts with SLC6A4 (via C-terminus); this interaction regulates SLC6A4 trafficking. ITGA2B:ITGB3 interacts with PPIA/CYPA; the interaction is ROS and PPIase activity-dependent and is increased in the presence of thrombin. Interacts with tensin TNS3; TNS3 also interacts with PEAK1, thus acting as an adapter molecule to bridge the association of PEAK1 with ITGB3. Interacts with TM4SF19. In terms of assembly, (Microbial infection) Integrin ITGAV:ITGB3 interacts with herpes virus 8/HHV-8 glycoprotein B. (Microbial infection) Integrin ITGAV:ITGB3 interacts with coxsackievirus A9 capsid proteins. As to quaternary structure, (Microbial infection) Interacts with Hantaan virus glycoprotein G. In terms of assembly, (Microbial infection) Integrin ITGAV:ITGB3 interacts with cytomegalovirus/HHV-5 gH:gL proteins. (Microbial infection) Integrin ITGA5:ITGB3 interacts with human metapneumovirus fusion protein. As to quaternary structure, (Microbial infection) Integrin ITGAV:ITGB3 interacts with human parechovirus 1 capsid proteins. In terms of assembly, (Microbial infection) Integrin ITGAV:ITGB3 interacts with west nile virus envelope protein E. (Microbial infection) Interacts with HIV-1 Tat. ITGAV:ITGB3 interacts with AGRA2. Phosphorylated on tyrosine residues in response to thrombin-induced platelet aggregation. Probably involved in outside-in signaling. A peptide (AA 740-762) is capable of binding GRB2 only when both Tyr-773 and Tyr-785 are phosphorylated. Phosphorylation of Thr-779 inhibits SHC binding. Isoform beta-3A and isoform beta-3C are widely expressed. Isoform beta-3A is specifically expressed in osteoblast cells; isoform beta-3C is specifically expressed in prostate and testis.

It is found in the cell membrane. The protein localises to the cell projection. It localises to the lamellipodium membrane. Its subcellular location is the cell junction. The protein resides in the focal adhesion. It is found in the postsynaptic cell membrane. The protein localises to the synapse. Functionally, integrin alpha-V/beta-3 (ITGAV:ITGB3) is a receptor for cytotactin, fibronectin, laminin, matrix metalloproteinase-2, osteopontin, osteomodulin, prothrombin, thrombospondin, vitronectin and von Willebrand factor. Integrin alpha-IIb/beta-3 (ITGA2B:ITGB3) is a receptor for fibronectin, fibrinogen, plasminogen, prothrombin, thrombospondin and vitronectin. Integrins alpha-IIb/beta-3 and alpha-V/beta-3 recognize the sequence R-G-D in a wide array of ligands. Integrin alpha-IIb/beta-3 recognizes the sequence H-H-L-G-G-G-A-K-Q-A-G-D-V in fibrinogen gamma chain. Following activation integrin alpha-IIb/beta-3 brings about platelet/platelet interaction through binding of soluble fibrinogen. This step leads to rapid platelet aggregation which physically plugs ruptured endothelial surface. Fibrinogen binding enhances SELP expression in activated platelets. ITGAV:ITGB3 binds to fractalkine (CX3CL1) and acts as its coreceptor in CX3CR1-dependent fractalkine signaling. ITGAV:ITGB3 binds to NRG1 (via EGF domain) and this binding is essential for NRG1-ERBB signaling. ITGAV:ITGB3 binds to FGF1 and this binding is essential for FGF1 signaling. ITGAV:ITGB3 binds to FGF2 and this binding is essential for FGF2 signaling. ITGAV:ITGB3 binds to IGF1 and this binding is essential for IGF1 signaling. ITGAV:ITGB3 binds to IGF2 and this binding is essential for IGF2 signaling. ITGAV:ITGB3 binds to IL1B and this binding is essential for IL1B signaling. ITGAV:ITGB3 binds to PLA2G2A via a site (site 2) which is distinct from the classical ligand-binding site (site 1) and this induces integrin conformational changes and enhanced ligand binding to site 1. ITGAV:ITGB3 acts as a receptor for fibrillin-1 (FBN1) and mediates R-G-D-dependent cell adhesion to FBN1. In brain, plays a role in synaptic transmission and plasticity. Involved in the regulation of the serotonin neurotransmission, is required to localize to specific compartments within the synapse the serotonin receptor SLC6A4 and for an appropriate reuptake of serotonin. Controls excitatory synaptic strength by regulating GRIA2-containing AMPAR endocytosis, which affects AMPAR abundance and composition. ITGAV:ITGB3 act as a receptor for CD40LG. ITGAV:ITGB3 acts as a receptor for IBSP and promotes cell adhesion and migration to IBSP. Its function is as follows. (Microbial infection) Integrin ITGAV:ITGB3 acts as a receptor for Herpes virus 8/HHV-8. (Microbial infection) Integrin ITGAV:ITGB3 acts as a receptor for Coxsackievirus A9. In terms of biological role, (Microbial infection) Acts as a receptor for Hantaan virus. Functionally, (Microbial infection) Integrin ITGAV:ITGB3 acts as a receptor for Cytomegalovirus/HHV-5. Its function is as follows. (Microbial infection) Integrin ITGA5:ITGB3 acts as a receptor for Human metapneumovirus. (Microbial infection) Integrin ITGAV:ITGB3 acts aP05556s a receptor for Human parechovirus 1. In terms of biological role, (Microbial infection) Integrin ITGAV:ITGB3 acts as a receptor for West nile virus. Functionally, (Microbial infection) In case of HIV-1 infection, the interaction with extracellular viral Tat protein seems to enhance angiogenesis in Kaposi's sarcoma lesions. This chain is Integrin beta-3, found in Homo sapiens (Human).